Consider the following 361-residue polypeptide: MSKSALDPVEFLKGALEIPSPSGKERLVAEYLAEGMQKLGLKGFVDEADNARGQVGEGPVQVVLLGHIDTVPGQIPVRLEGGRLFGRGAVDAKGPFVAMIFAAAGLSEEARKRLTVHLVGATEEEAPSSKGARFVAPRLKPHYAVIGEPSGWEGITLGYKGRLLVKARREKDHFHSAHHEPNAAEELISYFVAIKAWAEAMNVGQRPFDQVQYTLRDFRVHPAELRQVAEMFFDLRLPPRLPPEEAIRHLTAYAPPTIELEFFGREVPYQGPKDTPLTRAFRQAIRKAGGRPVFKLKTGTSDMNVLAPHWPVPMVAYGPGDSTLDHTPYEHVEVAEFLKGIEVLRGALEALAQTHAGEKEG.

H67 serves as a coordination point for Zn(2+). D69 is a catalytic residue. D91 provides a ligand contact to Zn(2+). The active-site Proton acceptor is E124. The Zn(2+) site is built by E125, E148, and H326.

It belongs to the peptidase M20A family. LysK subfamily. As to quaternary structure, homotetramer and homooctamer. Zn(2+) serves as cofactor. It depends on Co(2+) as a cofactor.

It localises to the cytoplasm. It catalyses the reaction [amino-group carrier protein]-C-terminal-gamma-(L-lysyl)-L-glutamate + H2O = [amino-group carrier protein]-C-terminal-L-glutamate + L-lysine. The protein operates within amino-acid biosynthesis; L-lysine biosynthesis via AAA pathway; L-lysine from L-alpha-aminoadipate (Thermus route): step 5/5. Catalyzes the release of L-lysine from [LysW]-gamma-L-lysine. In vitro, can deacetylate both N(2)-acetyl-L-lysine and N(2)-acetyl-L-ornithine. This is [LysW]-lysine hydrolase from Thermus thermophilus (strain ATCC BAA-163 / DSM 7039 / HB27).